A 666-amino-acid polypeptide reads, in one-letter code: DNA-directed RNA polymerase subunit beta' (666 aa).

Zn(2+) is bound by residues cysteine 69, cysteine 71, cysteine 87, and cysteine 90. Positions 489, 491, and 493 each coordinate Mg(2+).

Belongs to the RNA polymerase beta' chain family. RpoC1 subfamily. In plastids the minimal PEP RNA polymerase catalytic core is composed of four subunits: alpha, beta, beta', and beta''. When a (nuclear-encoded) sigma factor is associated with the core the holoenzyme is formed, which can initiate transcription. Mg(2+) is required as a cofactor. It depends on Zn(2+) as a cofactor.

It is found in the plastid. The protein localises to the chloroplast. It catalyses the reaction RNA(n) + a ribonucleoside 5'-triphosphate = RNA(n+1) + diphosphate. Its function is as follows. DNA-dependent RNA polymerase catalyzes the transcription of DNA into RNA using the four ribonucleoside triphosphates as substrates. The sequence is that of DNA-directed RNA polymerase subunit beta' from Chara vulgaris (Common stonewort).